The following is a 967-amino-acid chain: Phosphoenolpyruvate carboxylase 2 (967 aa).

Ser13 carries the post-translational modification Phosphoserine. Residues His174 and Lys602 contribute to the active site.

It belongs to the PEPCase type 1 family. Homotetramer. Requires Mg(2+) as cofactor.

The protein resides in the cytoplasm. It carries out the reaction oxaloacetate + phosphate = phosphoenolpyruvate + hydrogencarbonate. It functions in the pathway photosynthesis; C3 acid pathway. With respect to regulation, by light-reversible phosphorylation. Its function is as follows. Through the carboxylation of phosphoenolpyruvate (PEP) it forms oxaloacetate, a four-carbon dicarboxylic acid source for the tricarboxylic acid cycle. The polypeptide is Phosphoenolpyruvate carboxylase 2 (PEP4) (Zea mays (Maize)).